The primary structure comprises 338 residues: Holliday junction branch migration complex subunit RuvB (338 aa).

The segment at 1–22 (MIEADRLIHAEPQGPEERDEQI) is disordered. Residues 4–187 (ADRLIHAEPQ…FGIPLRLEFY (184 aa)) are large ATPase domain (RuvB-L). Residues R27, G68, K71, T72, T73, 134 to 136 (EDY), R177, Y187, and R224 each bind ATP. T72 contributes to the Mg(2+) binding site. The small ATPAse domain (RuvB-S) stretch occupies residues 188–258 (NTKDLSSIVS…VADLALDMLD (71 aa)). The head domain (RuvB-H) stretch occupies residues 261–338 (SEGFDYMDRK…RHFDIIQPEK (78 aa)). DNA is bound by residues R297, R316, and R321.

The protein belongs to the RuvB family. As to quaternary structure, homohexamer. Forms an RuvA(8)-RuvB(12)-Holliday junction (HJ) complex. HJ DNA is sandwiched between 2 RuvA tetramers; dsDNA enters through RuvA and exits via RuvB. An RuvB hexamer assembles on each DNA strand where it exits the tetramer. Each RuvB hexamer is contacted by two RuvA subunits (via domain III) on 2 adjacent RuvB subunits; this complex drives branch migration. In the full resolvosome a probable DNA-RuvA(4)-RuvB(12)-RuvC(2) complex forms which resolves the HJ.

It localises to the cytoplasm. It catalyses the reaction ATP + H2O = ADP + phosphate + H(+). Its function is as follows. The RuvA-RuvB-RuvC complex processes Holliday junction (HJ) DNA during genetic recombination and DNA repair, while the RuvA-RuvB complex plays an important role in the rescue of blocked DNA replication forks via replication fork reversal (RFR). RuvA specifically binds to HJ cruciform DNA, conferring on it an open structure. The RuvB hexamer acts as an ATP-dependent pump, pulling dsDNA into and through the RuvAB complex. RuvB forms 2 homohexamers on either side of HJ DNA bound by 1 or 2 RuvA tetramers; 4 subunits per hexamer contact DNA at a time. Coordinated motions by a converter formed by DNA-disengaged RuvB subunits stimulates ATP hydrolysis and nucleotide exchange. Immobilization of the converter enables RuvB to convert the ATP-contained energy into a lever motion, pulling 2 nucleotides of DNA out of the RuvA tetramer per ATP hydrolyzed, thus driving DNA branch migration. The RuvB motors rotate together with the DNA substrate, which together with the progressing nucleotide cycle form the mechanistic basis for DNA recombination by continuous HJ branch migration. Branch migration allows RuvC to scan DNA until it finds its consensus sequence, where it cleaves and resolves cruciform DNA. The sequence is that of Holliday junction branch migration complex subunit RuvB from Shewanella sediminis (strain HAW-EB3).